The primary structure comprises 152 residues: UPF0178 protein KPN78578_03210 (152 aa).

Belongs to the UPF0178 family.

The sequence is that of UPF0178 protein KPN78578_03210 from Klebsiella pneumoniae subsp. pneumoniae (strain ATCC 700721 / MGH 78578).